Consider the following 1289-residue polypeptide: uncharacterized protein (1289 aa).

Residues 1-23 (MRKYTVIASILLSFLSVLSGGHH) form the signal peptide. Residues 141 to 277 (EGYQADLAHI…VVISTNTGKD (137 aa)) enclose the LTD domain.

This is an uncharacterized protein from Bacillus subtilis (strain 168).